Reading from the N-terminus, the 185-residue chain is Peptidyl-tRNA hydrolase (185 aa).

Y14 is a tRNA binding site. H19 serves as the catalytic Proton acceptor. Positions 64, 66, and 112 each coordinate tRNA.

The protein belongs to the PTH family. Monomer.

It is found in the cytoplasm. It carries out the reaction an N-acyl-L-alpha-aminoacyl-tRNA + H2O = an N-acyl-L-amino acid + a tRNA + H(+). Hydrolyzes ribosome-free peptidyl-tRNAs (with 1 or more amino acids incorporated), which drop off the ribosome during protein synthesis, or as a result of ribosome stalling. In terms of biological role, catalyzes the release of premature peptidyl moieties from peptidyl-tRNA molecules trapped in stalled 50S ribosomal subunits, and thus maintains levels of free tRNAs and 50S ribosomes. The chain is Peptidyl-tRNA hydrolase from Exiguobacterium sibiricum (strain DSM 17290 / CCUG 55495 / CIP 109462 / JCM 13490 / 255-15).